The chain runs to 304 residues: Acetaldehyde dehydrogenase 4 (304 aa).

The active-site Acyl-thioester intermediate is Cys-131. NAD(+) is bound by residues 162-170 and Asn-273; that span reads SAGPGTRKN.

This sequence belongs to the acetaldehyde dehydrogenase family.

It carries out the reaction acetaldehyde + NAD(+) + CoA = acetyl-CoA + NADH + H(+). The polypeptide is Acetaldehyde dehydrogenase 4 (Dechloromonas aromatica (strain RCB)).